The primary structure comprises 1343 residues: DNA-directed RNA polymerase subunit beta (1343 aa).

Belongs to the RNA polymerase beta chain family. In terms of assembly, the RNAP catalytic core consists of 2 alpha, 1 beta, 1 beta' and 1 omega subunit. When a sigma factor is associated with the core the holoenzyme is formed, which can initiate transcription.

The enzyme catalyses RNA(n) + a ribonucleoside 5'-triphosphate = RNA(n+1) + diphosphate. DNA-dependent RNA polymerase catalyzes the transcription of DNA into RNA using the four ribonucleoside triphosphates as substrates. This chain is DNA-directed RNA polymerase subunit beta, found in Shewanella loihica (strain ATCC BAA-1088 / PV-4).